Consider the following 378-residue polypeptide: C-C chemokine receptor type 7 (378 aa).

An N-terminal signal peptide occupies residues 1–24 (MDPGKPRKNVLVVALLVIFQVCFC). The Extracellular segment spans residues 25–59 (QDEVTDDYIGENTTVDYTLYESVCFKKDVRNFKAW). A glycan (N-linked (GlcNAc...) asparagine) is linked at N36. A helical membrane pass occupies residues 60 to 86 (FLPLMYSVICFVGLLGNGLVILTYIYF). Over 87-95 (KRLKTMTDT) the chain is Cytoplasmic. A helical transmembrane segment spans residues 96–116 (YLLNLAVADILFLLILPFWAY). The Extracellular portion of the chain corresponds to 117-130 (SEAKSWIFGVYLCK). C129 and C210 are joined by a disulfide. A helical membrane pass occupies residues 131 to 152 (GIFGIYKLSFFSGMLLLLCISI). The Cytoplasmic portion of the chain corresponds to 153–170 (DRYVAIVQAVSAHRHRAR). The helical transmembrane segment at 171–191 (VLLISKLSCVGIWMLALFLSI) threads the bilayer. At 192 to 219 (PELLYSGLQKNSGEDTLRCSLVSAQVEA) the chain is on the extracellular side. Residues 220 to 247 (LITIQVAQMVFGFLVPMLAMSFCYLIII) traverse the membrane as a helical segment. Residues 248–263 (RTLLQARNFERNKAIK) lie on the Cytoplasmic side of the membrane. The helical transmembrane segment at 264–289 (VIIAVVVVFIVFQLPYNGVVLAQTVA) threads the bilayer. Residues 290–313 (NFNITNSSCETSKQLNIAYDVTYS) lie on the Extracellular side of the membrane. A helical transmembrane segment spans residues 314–331 (LASVRCCVNPFLYAFIGV). The Cytoplasmic portion of the chain corresponds to 332–378 (KFRSDLFKLFKDLGCLSQERLRHWSSCRHVRNASVSMEAETTTTFSP).

It belongs to the G-protein coupled receptor 1 family.

It localises to the cell membrane. Functionally, receptor for the MIP-3-beta chemokine. This is C-C chemokine receptor type 7 (Ccr7) from Mus musculus (Mouse).